The sequence spans 425 residues: Raffinose permease (425 aa).

Residues 1–11 (MNSASTHKNTD) lie on the Cytoplasmic side of the membrane. The chain crosses the membrane as a helical span at residues 12-32 (FWIFGLFFFLYFFIMATCFPF). Topologically, residues 33 to 48 (LPVWLSDVVGLSKTDT) are periplasmic. The chain crosses the membrane as a helical span at residues 49–69 (GIVFSCLSLFAISFQPLLGVI). Residues 70-78 (SDRLGLKKN) are Cytoplasmic-facing. Residues 79–99 (LIWSISLLLVFFAPFFLYVFA) traverse the membrane as a helical segment. Over 100–105 (PLLHLN) the chain is Periplasmic. A helical transmembrane segment spans residues 106–126 (IWAGALTGGVFIGFVFSAGAG). Residues 127 to 147 (AIEAYIERVSRSSGFEYGKAR) lie on the Cytoplasmic side of the membrane. The chain crosses the membrane as a helical span at residues 148-168 (MFGCLGWALCATMAGILFNVD). Residue Pro-169 is a topological domain, periplasmic. The helical transmembrane segment at 170 to 190 (SLVFWMGSGGALLLLLLLYLA) threads the bilayer. At 191–229 (RPSTSQTAMVMNALGANSSLISTRMVFSLFRMRQMWMFV) the chain is on the cytoplasmic side. The chain crosses the membrane as a helical span at residues 230–250 (LYTIGVACVYDVFDQQFAIFF). At 251-265 (RSFFDTPQAGIKAFG) the chain is on the periplasmic side. A helical membrane pass occupies residues 266–286 (FATTAGEICNAIIMFCTPWII). The Cytoplasmic portion of the chain corresponds to 287–294 (NRIGAKNT). A helical membrane pass occupies residues 295–315 (LLVAGGIMTIRITGSAFATTM). Residue Thr-316 is a topological domain, periplasmic. The helical transmembrane segment at 317–337 (EVVILKMLHALEVPFLLVGAF) threads the bilayer. At 338-351 (KYITGVFDTRLSAT) the chain is on the cytoplasmic side. The chain crosses the membrane as a helical span at residues 352-372 (VYLIGFQFSKQLAAILLSTFA). The Periplasmic segment spans residues 373–383 (GHLYDRMGFQN). The chain crosses the membrane as a helical span at residues 384–404 (TYFVLGMIVLTVTVISAFTLS). Topologically, residues 405–425 (SSPGIVHPSVEKAPVAHSEIN) are cytoplasmic.

Belongs to the major facilitator superfamily. Oligosaccharide:H(+) symporter (OHS) (TC 2.A.1.5) family. As to quaternary structure, monomer.

The protein localises to the cell inner membrane. Its function is as follows. Responsible for transport of raffinose into the cell. Can also transport lactose and melibiose. Has weak activity with maltose. In Escherichia coli, this protein is Raffinose permease.